Reading from the N-terminus, the 156-residue chain is Small ribosomal subunit protein uS7 (156 aa).

Belongs to the universal ribosomal protein uS7 family. Part of the 30S ribosomal subunit. Contacts proteins S9 and S11.

In terms of biological role, one of the primary rRNA binding proteins, it binds directly to 16S rRNA where it nucleates assembly of the head domain of the 30S subunit. Is located at the subunit interface close to the decoding center, probably blocks exit of the E-site tRNA. The chain is Small ribosomal subunit protein uS7 from Nitratiruptor sp. (strain SB155-2).